Here is a 355-residue protein sequence, read N- to C-terminus: Peptide chain release factor 1 (355 aa).

Glutamine 229 is modified (N5-methylglutamine). Residues 280–299 are disordered; the sequence is LDRERSAARKGQVGSGDRSE.

Belongs to the prokaryotic/mitochondrial release factor family. Methylated by PrmC. Methylation increases the termination efficiency of RF1.

The protein localises to the cytoplasm. Peptide chain release factor 1 directs the termination of translation in response to the peptide chain termination codons UAG and UAA. In Parvibaculum lavamentivorans (strain DS-1 / DSM 13023 / NCIMB 13966), this protein is Peptide chain release factor 1.